The primary structure comprises 319 residues: Transaldolase (319 aa).

Lys125 acts as the Schiff-base intermediate with substrate in catalysis.

Belongs to the transaldolase family. Type 1 subfamily. In terms of assembly, homodimer.

Its subcellular location is the cytoplasm. It catalyses the reaction D-sedoheptulose 7-phosphate + D-glyceraldehyde 3-phosphate = D-erythrose 4-phosphate + beta-D-fructose 6-phosphate. The protein operates within carbohydrate degradation; pentose phosphate pathway; D-glyceraldehyde 3-phosphate and beta-D-fructose 6-phosphate from D-ribose 5-phosphate and D-xylulose 5-phosphate (non-oxidative stage): step 2/3. In terms of biological role, transaldolase is important for the balance of metabolites in the pentose-phosphate pathway. This chain is Transaldolase, found in Ralstonia pickettii (strain 12J).